Consider the following 876-residue polypeptide: Neurotrypsin (876 aa).

Residues 1–20 (MTLARFVLALMLGALPEVVG) form the signal peptide. Asparagine 26 carries an N-linked (GlcNAc...) asparagine glycan. The disordered stretch occupies residues 29-89 (LHHSHRHSPP…ALQAGHTPRP (61 aa)). Low complexity predominate over residues 43–54 (YPSYYLPTQQRP). The span at 57-72 (TRPPPPLPRFPRPPRA) shows a compositional bias: pro residues. Positions 94–166 (CPAGEPWVSV…GKVDWGYCDC (73 aa)) constitute a Kringle domain. 20 cysteine pairs are disulfide-bonded: cysteine 94–cysteine 166, cysteine 110–cysteine 150, cysteine 139–cysteine 164, cysteine 196–cysteine 260, cysteine 209–cysteine 270, cysteine 240–cysteine 250, cysteine 306–cysteine 370, cysteine 319–cysteine 380, cysteine 350–cysteine 360, cysteine 413–cysteine 476, cysteine 426–cysteine 486, cysteine 456–cysteine 466, cysteine 526–cysteine 590, cysteine 539–cysteine 600, cysteine 570–cysteine 580, cysteine 620–cysteine 751, cysteine 662–cysteine 678, cysteine 766–cysteine 832, cysteine 795–cysteine 809, and cysteine 822–cysteine 851. SRCR domains are found at residues 171-272 (VRLR…TCSF), 281-382 (IRLA…SCTP), 388-488 (IRLA…ACYP), and 501-602 (VRLM…ICDY). Residues 620–631 (CGLRLLHRRQKR) are zymogen activation region. In terms of domain architecture, Peptidase S1 spans 632 to 875 (IIGGKNSLRG…FVPWIKSVTK (244 aa)). The Charge relay system role is filled by histidine 677. Asparagine 684 carries an N-linked (GlcNAc...) asparagine glycan. Aspartate 727 (charge relay system) is an active-site residue. Serine 826 functions as the Charge relay system in the catalytic mechanism.

The protein belongs to the peptidase S1 family.

It localises to the secreted. Plays a role in neuronal plasticity and the proteolytic action may subserve structural reorganizations associated with learning and memory operations. This Gorilla gorilla gorilla (Western lowland gorilla) protein is Neurotrypsin (PRSS12).